A 586-amino-acid chain; its full sequence is Succinate dehydrogenase flavoprotein subunit (586 aa).

FAD is bound by residues 10-15 and 33-48; these read GGGLAG and SIVP…AQGG. His41 carries the tele-8alpha-FAD histidine modification. Substrate contacts are provided by His236 and Ser250. Catalysis depends on Arg285, which acts as the Proton acceptor. Position 352 (His352) interacts with substrate. FAD is bound at residue Glu376. Residue Arg386 participates in substrate binding. 391-392 contributes to the FAD binding site; that stretch reads SL.

The protein belongs to the FAD-dependent oxidoreductase 2 family. FRD/SDH subfamily. In terms of assembly, in B.subtilis succinate dehydrogenase forms part of an enzyme complex containing three subunits: a flavoprotein, an iron-sulfur protein and cytochrome b-558. Interacts with FloT. The cofactor is FAD.

It localises to the cell membrane. The protein localises to the membrane raft. The catalysed reaction is a quinone + succinate = fumarate + a quinol. The protein operates within carbohydrate metabolism; tricarboxylic acid cycle; fumarate from succinate (bacterial route): step 1/1. This chain is Succinate dehydrogenase flavoprotein subunit (sdhA), found in Bacillus subtilis (strain 168).